The primary structure comprises 173 residues: MDIAIQHPWFKRTLGPFYPSRLFDQFFGEGLFEYDLLPFLSSTISPYYRQSLFRTVLDSGISEVRSDRDKFVIFLDVKHFSPEDLTVKVQEDFVEIHGKHNERQDDHGYISREFHRRYRLPSNVDQSALSCSLSADGMLTFSGPKVPSGVDAGHSERAIPVSREEKPSSAPSS.

N-acetylmethionine is present on M1. Residues 1–63 (MDIAIQHPWF…RTVLDSGISE (63 aa)) are required for complex formation with BFSP1 and BFSP2. Q6 is modified (deamidated glutamine; partial). S45 carries the phosphoserine modification. Q50 is subject to Deamidated glutamine; partial. A sHSP domain is found at 52–162 (LFRTVLDSGI…GHSERAIPVS (111 aa)). Residue K70 is modified to N6-acetyllysine. The residue at position 90 (Q90) is a Deamidated glutamine; partial. Residue K99 is modified to N6-acetyllysine. H100 contributes to the Zn(2+) binding site. The residue at position 101 (N101) is a Deamidated asparagine; partial. Zn(2+)-binding residues include E102 and H107. S122 carries the phosphoserine modification. N123 is subject to Deamidated asparagine; partial. The tract at residues 144 to 173 (PKVPSGVDAGHSERAIPVSREEKPSSAPSS) is disordered. A compositionally biased stretch (basic and acidic residues) spans 153 to 167 (GHSERAIPVSREEKP). H154 contributes to the Zn(2+) binding site. S162 carries O-linked (GlcNAc) serine glycosylation.

Belongs to the small heat shock protein (HSP20) family. Heteromer composed of three CRYAA and one CRYAB subunits. Inter-subunit bridging via zinc ions enhances stability, which is crucial as there is no protein turn over in the lens. Can also form homodimers and homotetramers (dimers of dimers) which serve as the building blocks of homooligomers. Within homooligomers, the zinc-binding motif is created from residues of 3 different molecules. His-100 and Glu-102 from one molecule are ligands of the zinc ion, and His-107 and His-154 residues from additional molecules complete the site with tetrahedral coordination geometry. Part of a complex required for lens intermediate filament formation composed of BFSP1, BFSP2 and CRYAA. In terms of processing, acetylation at Lys-70 may increase chaperone activity. Post-translationally, undergoes age-dependent proteolytical cleavage at the C-terminus.

The protein localises to the cytoplasm. Its subcellular location is the nucleus. Contributes to the transparency and refractive index of the lens. Acts as a chaperone, preventing aggregation of various proteins under a wide range of stress conditions. Required for the correct formation of lens intermediate filaments as part of a complex composed of BFSP1, BFSP2 and CRYAA. The polypeptide is Alpha-crystallin A chain (CRYAA) (Ovis aries (Sheep)).